A 292-amino-acid polypeptide reads, in one-letter code: Ribosomal protein L11 methyltransferase (292 aa).

S-adenosyl-L-methionine is bound by residues Thr-136, Gly-159, Asp-181, and Asn-228.

It belongs to the methyltransferase superfamily. PrmA family.

It localises to the cytoplasm. The enzyme catalyses L-lysyl-[protein] + 3 S-adenosyl-L-methionine = N(6),N(6),N(6)-trimethyl-L-lysyl-[protein] + 3 S-adenosyl-L-homocysteine + 3 H(+). Its function is as follows. Methylates ribosomal protein L11. This chain is Ribosomal protein L11 methyltransferase, found in Rhizobium etli (strain CIAT 652).